A 224-amino-acid polypeptide reads, in one-letter code: Cytidylate kinase (224 aa).

An ATP-binding site is contributed by 11-19; that stretch reads GPASAGKST.

It belongs to the cytidylate kinase family. Type 1 subfamily.

The protein resides in the cytoplasm. The catalysed reaction is CMP + ATP = CDP + ADP. The enzyme catalyses dCMP + ATP = dCDP + ADP. The protein is Cytidylate kinase of Ligilactobacillus salivarius (strain UCC118) (Lactobacillus salivarius).